We begin with the raw amino-acid sequence, 361 residues long: MLYLLSELSGVFSPFNVFRYITFRTGGALFTAGLFVFWFGPWIISLLRLRQGKGQPIREDGPQTHLLTKRGTPTMGGLMILAGLLVAVLLWANPRNSYVWITVVVTLGFGAIGFYDDYLKVTKQSHKGFSGKFRLGLEALIAVAACVAVAEYSAPGLAYRLAFPVFKDAIVNLGLFWILFASFVIVGAGNAVNITDGLDGLAIVPVMIAAATFGIIAYLVGNVIYASYLQVNYVPGTGELAVVCGALIGAGLGFLWFNAPPAQIFMGDTGSLALGGLLGTVAVATKHEIVLAVVGGLFVLEIASVIIQVASFKLTGKRVFRMAPIHHHFEQKGWKEPQVVIRFWIIAVVLALLGLATLKLR.

10 consecutive transmembrane segments (helical) span residues 27-47, 72-92, 99-119, 139-159, 169-189, 200-220, 240-260, 264-284, 289-309, and 338-358; these read GALF…ISLL, TPTM…LLWA, VWIT…DDYL, ALIA…GLAY, AIVN…VGAG, GLAI…AYLV, LAVV…FNAP, IFMG…VAVA, IVLA…IIQV, and QVVI…LATL.

Belongs to the glycosyltransferase 4 family. MraY subfamily. Mg(2+) is required as a cofactor.

It is found in the cell inner membrane. The enzyme catalyses UDP-N-acetyl-alpha-D-muramoyl-L-alanyl-gamma-D-glutamyl-meso-2,6-diaminopimeloyl-D-alanyl-D-alanine + di-trans,octa-cis-undecaprenyl phosphate = di-trans,octa-cis-undecaprenyl diphospho-N-acetyl-alpha-D-muramoyl-L-alanyl-D-glutamyl-meso-2,6-diaminopimeloyl-D-alanyl-D-alanine + UMP. It functions in the pathway cell wall biogenesis; peptidoglycan biosynthesis. Catalyzes the initial step of the lipid cycle reactions in the biosynthesis of the cell wall peptidoglycan: transfers peptidoglycan precursor phospho-MurNAc-pentapeptide from UDP-MurNAc-pentapeptide onto the lipid carrier undecaprenyl phosphate, yielding undecaprenyl-pyrophosphoryl-MurNAc-pentapeptide, known as lipid I. In Methylobacterium nodulans (strain LMG 21967 / CNCM I-2342 / ORS 2060), this protein is Phospho-N-acetylmuramoyl-pentapeptide-transferase.